A 557-amino-acid chain; its full sequence is E3 ubiquitin-protein ligase rnf168 (557 aa).

The RING-type zinc-finger motif lies at 16–55 (CPICQEILLEPVTLPCKHTLCNPCFQMTVEKASLCCPFCR). An LR motif 1 motif is present at residues 112–130 (LCQPGEIRQEYEAEVSKIE). Residues 145 to 153 (EDYIQKLLA) carry the UMI motif motif. 2 consecutive short sequence motifs (MIU motif) follow at residues 170–193 (MEEQ…VSNA) and 422–445 (RRRQ…KELK). An LR motif 2 motif is present at residues 449–460 (RGKGSPDEYELR). The segment at 482-543 (PLRKEIPVQD…GINVLKPINK (62 aa)) is disordered. The segment covering 490-500 (QDNSRNTQSEY) has biased composition (polar residues). The span at 508–521 (PSRKNSVRSARVRQ) shows a compositional bias: basic residues.

This sequence belongs to the RNF168 family. As to quaternary structure, monomer.

It is found in the nucleus. It carries out the reaction S-ubiquitinyl-[E2 ubiquitin-conjugating enzyme]-L-cysteine + [acceptor protein]-L-lysine = [E2 ubiquitin-conjugating enzyme]-L-cysteine + N(6)-ubiquitinyl-[acceptor protein]-L-lysine.. Its pathway is protein modification; protein ubiquitination. In terms of biological role, E3 ubiquitin-protein ligase required for accumulation of repair proteins to sites of DNA damage. Acts with ube2n/ubc13 to amplify the rnf8-dependent histone ubiquitination. Recruited to sites of DNA damage at double-strand breaks (DSBs) by binding to ubiquitinated histone H2A and ubiquitinates histone H2A and H2AX, leading to amplify the rnf8-dependent H2A ubiquitination and promoting the formation of 'Lys-63'-linked ubiquitin conjugates. This leads to concentrate ubiquitinated histones H2A and H2AX at DNA lesions to the threshold required for recruitment of tp53bp1 and brca1. Catalyzes monoubiquitination of 'Lys-13' and 'Lys-15' of nucleosomal histone H2A (H2AK13Ub and H2AK15Ub, respectively). The sequence is that of E3 ubiquitin-protein ligase rnf168 from Xenopus laevis (African clawed frog).